Here is a 489-residue protein sequence, read N- to C-terminus: Protein TOS4 (489 aa).

Polar residues-rich tracts occupy residues 1-10 (MSSQFPSSPY) and 20-32 (NYKQQPNCPSSNY). The disordered stretch occupies residues 1-101 (MSSQFPSSPY…FSSKLSSPSR (101 aa)). Ser-40 is modified (phosphoserine). Positions 56–68 (PSSSIGRVSSPVR) are enriched in polar residues. Over residues 89 to 100 (SPKFSSKLSSPS) the composition is skewed to low complexity. Residue Ser-100 is modified to Phosphoserine. Residues 118–170 (ITVGRNSSQCDVALCKNKFISRVHASITYLPQTNEVKIHCFSMNGLIVTYRKQ) enclose the FHA domain. Positions 316-366 (SSPLSSVSSVDHEEQTLRQDSLSSDKNPMTMKKPKLNKRVLPSKPKKSVKE) are disordered. Positions 333-342 (RQDSLSSDKN) are enriched in polar residues.

It belongs to the PLM2/TOS4 family. Phosphorylated by CDC28.

It localises to the nucleus. Its function is as follows. Binds to the promoters of genes with functions important for the G1/S (start) transition; primarily genes involved in pheromone response, polarized growth and transcription. This Saccharomyces cerevisiae (strain ATCC 204508 / S288c) (Baker's yeast) protein is Protein TOS4 (TOS4).